Here is a 190-residue protein sequence, read N- to C-terminus: Segregation and condensation protein B (190 aa).

It belongs to the ScpB family. Homodimer. Homodimerization may be required to stabilize the binding of ScpA to the Smc head domains. Component of a cohesin-like complex composed of ScpA, ScpB and the Smc homodimer, in which ScpA and ScpB bind to the head domain of Smc. The presence of the three proteins is required for the association of the complex with DNA.

The protein resides in the cytoplasm. Functionally, participates in chromosomal partition during cell division. May act via the formation of a condensin-like complex containing Smc and ScpA that pull DNA away from mid-cell into both cell halves. The sequence is that of Segregation and condensation protein B from Alkaliphilus metalliredigens (strain QYMF).